Consider the following 1067-residue polypeptide: Myocardin-related transcription factor B (1067 aa).

3 RPEL repeats span residues 46–71 (EVLQ…PPLK), 90–115 (NFLK…EETL), and 134–159 (DDLN…PVDL). Disordered regions lie at residues 175–223 (NLDT…NTTI) and 249–286 (PLSC…PRVK). 2 stretches are compositionally biased toward polar residues: residues 193-203 (QPASQESQGSA) and 212-223 (SDSSSPVSNTTI). Basic and acidic residues predominate over residues 268–283 (KHTEKPRSKKSKDPKP). Residues 390–424 (LDDMKVAELKMELKLRGLPVSGTKMDLIERLKPFQ) form the SAP domain. Residues 540–594 (GNTPNVELDAVEKDRKLQEKEKQIEELKRKLEQEQKLVEVLKKQLELEKRGQQQQ) are a coiled coil. Polar residues predominate over residues 799–819 (ISTSAQPQRSTQLTAVQNGPT). Residues 799-829 (ISTSAQPQRSTQLTAVQNGPTSLHEKSSTPP) form a disordered region.

Interacts with SRF.

It localises to the nucleus. Poor transcriptional factor which uses the canonical single or multiple CArG boxes DNA sequence. Acts as a cofactor of serum response factor (SRF) with the potential to modulate SRF target genes. This is Myocardin-related transcription factor B (mrtfb) from Xenopus laevis (African clawed frog).